The sequence spans 556 residues: Energy-dependent translational throttle protein EttA (556 aa).

ABC transporter domains follow at residues 7-260 (YTMH…EQEQ) and 325-551 (IEVQ…RIKY). 40–47 (GLNGAGKS) serves as a coordination point for ATP. The interval 96–140 (SEVKNALTRLDEVYALYADPDADFDKLAAEQANLEAIIQAHDGHN) is arm. The tract at residues 243-323 (GNYSSWLEQK…IPPGPRLGDK (81 aa)) is ptIM. 357–364 (GANGAGKS) contributes to the ATP binding site.

This sequence belongs to the ABC transporter superfamily. ABCF family. Translational throttle EttA subfamily. As to quaternary structure, monomer. Probably contacts ribosomal proteins L1, L5, L33 and S7, the 16S and 23S rRNA and the P-site containing tRNA(fMet).

It is found in the cytoplasm. The enzyme catalyses ATP + H2O = ADP + phosphate + H(+). A translation factor that gates the progression of the 70S ribosomal initiation complex (IC, containing tRNA(fMet) in the P-site) into the translation elongation cycle by using a mechanism sensitive to the ATP/ADP ratio. Binds to the 70S ribosome E-site where it modulates the state of the translating ribosome during subunit translocation. ATP hydrolysis probably frees it from the ribosome, which can enter the elongation phase. This is Energy-dependent translational throttle protein EttA from Haemophilus influenzae (strain ATCC 51907 / DSM 11121 / KW20 / Rd).